The sequence spans 142 residues: Hemoglobin subunit alpha (142 aa).

The Globin domain occupies 2–142 (VLSAADKGHV…VSTVLTSKYR (141 aa)). Residue serine 4 is modified to Phosphoserine. N6-succinyllysine occurs at positions 8 and 12. Lysine 17 carries the N6-acetyllysine; alternate modification. Lysine 17 carries the post-translational modification N6-succinyllysine; alternate. Tyrosine 25 is modified (phosphotyrosine). Phosphoserine is present on serine 36. Position 41 is an N6-succinyllysine (lysine 41). Serine 50 bears the Phosphoserine mark. An O2-binding site is contributed by histidine 59. Residue histidine 88 participates in heme b binding. Serine 103 bears the Phosphoserine mark. Position 109 is a phosphothreonine (threonine 109). Serine 125 carries the phosphoserine modification. Residues threonine 135 and threonine 138 each carry the phosphothreonine modification. Residue serine 139 is modified to Phosphoserine.

Belongs to the globin family. Heterotetramer of two alpha chains and two beta chains. In terms of tissue distribution, red blood cells.

In terms of biological role, involved in oxygen transport from the lung to the various peripheral tissues. Its function is as follows. Hemopressin acts as an antagonist peptide of the cannabinoid receptor CNR1. Hemopressin-binding efficiently blocks cannabinoid receptor CNR1 and subsequent signaling. The polypeptide is Hemoglobin subunit alpha (HBA) (Notamacropus eugenii (Tammar wallaby)).